The chain runs to 492 residues: 3-octaprenyl-4-hydroxybenzoate carboxy-lyase (492 aa).

Asn177 contributes to the Mn(2+) binding site. Prenylated FMN is bound by residues 180 to 182 (IYR), 194 to 196 (RWL), and 199 to 200 (RG). Residue Glu243 coordinates Mn(2+). Asp292 acts as the Proton donor in catalysis.

Belongs to the UbiD family. Homohexamer. Prenylated FMN is required as a cofactor. It depends on Mn(2+) as a cofactor.

The protein resides in the cell membrane. The catalysed reaction is a 4-hydroxy-3-(all-trans-polyprenyl)benzoate + H(+) = a 2-(all-trans-polyprenyl)phenol + CO2. It participates in cofactor biosynthesis; ubiquinone biosynthesis. Functionally, catalyzes the decarboxylation of 3-octaprenyl-4-hydroxy benzoate to 2-octaprenylphenol, an intermediate step in ubiquinone biosynthesis. The sequence is that of 3-octaprenyl-4-hydroxybenzoate carboxy-lyase from Neisseria meningitidis serogroup C / serotype 2a (strain ATCC 700532 / DSM 15464 / FAM18).